Here is a 930-residue protein sequence, read N- to C-terminus: Serine/threonine-protein kinase PknD (930 aa).

The 288-residue stretch at 4 to 291 folds into the Protein kinase domain; that stretch reads YDIIRMIGKG…ALKADIEQHL (288 aa). Residues 10 to 18 and Lys33 each bind ATP; that span reads IGKGGMGEV. Asp138 acts as the Proton acceptor in catalysis.

The protein belongs to the protein kinase superfamily. Ser/Thr protein kinase family. In terms of processing, autophosphorylated on serine and threonine residues.

It carries out the reaction L-seryl-[protein] + ATP = O-phospho-L-seryl-[protein] + ADP + H(+). It catalyses the reaction L-threonyl-[protein] + ATP = O-phospho-L-threonyl-[protein] + ADP + H(+). Functionally, together with the serine/threonine kinase Pkn1, may play a role in the specific interactions with host proteins during intracellular growth. The polypeptide is Serine/threonine-protein kinase PknD (Chlamydia caviae (strain ATCC VR-813 / DSM 19441 / 03DC25 / GPIC) (Chlamydophila caviae)).